The sequence spans 249 residues: Isoprenyl transferase 1 (249 aa).

The active site involves Asp30. Residue Asp30 coordinates Mg(2+). Residues 31–34, Trp35, Arg43, His47, and 75–77 contribute to the substrate site; these read GNGR and STE. Asn78 serves as the catalytic Proton acceptor. Substrate-binding positions include Trp79, Arg81, Arg198, and 204 to 206; that span reads RMS. Position 217 (Glu217) interacts with Mg(2+).

Belongs to the UPP synthase family. Homodimer. The cofactor is Mg(2+).

Its function is as follows. Catalyzes the condensation of isopentenyl diphosphate (IPP) with allylic pyrophosphates generating different type of terpenoids. The sequence is that of Isoprenyl transferase 1 from Tropheryma whipplei (strain Twist) (Whipple's bacillus).